An 81-amino-acid polypeptide reads, in one-letter code: Three-finger toxin MALT0051C (81 aa).

Positions 1–21 (MKTLLLTLVVVTVVCLDFGHT) are cleaved as a signal peptide. 4 disulfide bridges follow: cysteine 24–cysteine 43, cysteine 38–cysteine 60, cysteine 62–cysteine 73, and cysteine 74–cysteine 79.

This sequence belongs to the three-finger toxin family. Short-chain subfamily. Type I alpha-neurotoxin sub-subfamily. As to expression, expressed by the venom gland.

It is found in the secreted. Binds to muscle nicotinic acetylcholine receptor (nAChR) and inhibit acetylcholine from binding to the receptor, thereby impairing neuromuscular transmission. The sequence is that of Three-finger toxin MALT0051C from Micrurus altirostris (Uruguayan coral snake).